The following is a 433-amino-acid chain: Phosphoribosylamine--glycine ligase (433 aa).

The 208-residue stretch at 110–317 folds into the ATP-grasp domain; that stretch reads RNFMKKYGIE…FVDIMSAVVK (208 aa). 137 to 194 provides a ligand contact to ATP; sequence IEKLGDVAVKPSGLTGGKGVKVMGDQLPDLKAAKAYTSELLEKGSVVIEERFIGEEFT. Gln-275, Glu-287, and Asn-289 together coordinate Mg(2+). Mn(2+) contacts are provided by Gln-275, Glu-287, and Asn-289.

Belongs to the GARS family. It depends on Mg(2+) as a cofactor. Mn(2+) serves as cofactor.

The catalysed reaction is 5-phospho-beta-D-ribosylamine + glycine + ATP = N(1)-(5-phospho-beta-D-ribosyl)glycinamide + ADP + phosphate + H(+). It functions in the pathway purine metabolism; IMP biosynthesis via de novo pathway; N(1)-(5-phospho-D-ribosyl)glycinamide from 5-phospho-alpha-D-ribose 1-diphosphate: step 2/2. The sequence is that of Phosphoribosylamine--glycine ligase from Methanosarcina barkeri (strain Fusaro / DSM 804).